Reading from the N-terminus, the 26-residue chain is ATP synthase subunit gamma, mitochondrial (26 aa).

It belongs to the ATPase gamma chain family. F-type ATPases have 2 components, CF(1) - the catalytic core - and CF(0) - the membrane proton channel. CF(1) has five subunits: alpha(3), beta(3), gamma(1), delta(1), epsilon(1). CF(0) has three main subunits: a, b and c.

It is found in the mitochondrion. The protein resides in the mitochondrion inner membrane. Its function is as follows. Mitochondrial membrane ATP synthase (F(1)F(0) ATP synthase or Complex V) produces ATP from ADP in the presence of a proton gradient across the membrane which is generated by electron transport complexes of the respiratory chain. F-type ATPases consist of two structural domains, F(1) - containing the extramembraneous catalytic core, and F(0) - containing the membrane proton channel, linked together by a central stalk and a peripheral stalk. During catalysis, ATP synthesis in the catalytic domain of F(1) is coupled via a rotary mechanism of the central stalk subunits to proton translocation. Part of the complex F(1) domain and the central stalk which is part of the complex rotary element. The gamma subunit protrudes into the catalytic domain formed of alpha(3)beta(3). Rotation of the central stalk against the surrounding alpha(3)beta(3) subunits leads to hydrolysis of ATP in three separate catalytic sites on the beta subunits. This Spinacia oleracea (Spinach) protein is ATP synthase subunit gamma, mitochondrial (ATPC).